The following is a 467-amino-acid chain: MYGNYPHFIKFPAGFGNSPVHASSTSVSPSSSLSVGSTVDGHHNYLEAPTNASRALPSPMNTIGSPVNALGSPYRVIASSIGSHPVALSSSAPGMNFVTHSPQPNVLNNVSSSEDIKPLPGLPGIGNMNYPSTSPGSLAKHICAICGDRSSGKHYGVYSCEGCKGFFKRTIRKDLIYTCRDNKDCLIDKRQRNRCQYCRYQKCLAMGMKREAVQEERQGSRERSENEAESTSGGSEDMPVERILEAELAVEPKTEAYSDVNTESSTNDPVTNICHAADKQLFTLVEWAKRIPHFSDLTLEDQVILLRAGWNELLIASFSHRSVSVQDGILLATGLHVHRSSAHSAGVGSIFDRVLTELVSKMKDMQMDKSELGCLRAIVLFNPDAKGLSSPSEVESLREKVYATLEAYTKQKYPEQPGRFAKLLLRLPALRSIGLKCLEHLFFFKLIGDTPIDTFLMEMLETPLQVT.

The modulating stretch occupies residues 1–142 (MYGNYPHFIK…TSPGSLAKHI (142 aa)). 2 NR C4-type zinc fingers span residues 143-163 (CAIC…CEGC) and 179-203 (CRDN…YQKC). Positions 143-208 (CAICGDRSSG…RYQKCLAMGM (66 aa)) form a DNA-binding region, nuclear receptor. The tract at residues 209–232 (KREAVQEERQGSRERSENEAESTS) is hinge. A compositionally biased stretch (basic and acidic residues) spans 214-226 (QEERQGSRERSEN). The disordered stretch occupies residues 214–237 (QEERQGSRERSENEAESTSGGSED). The NR LBD domain maps to 235–463 (SEDMPVERIL…TFLMEMLETP (229 aa)).

It belongs to the nuclear hormone receptor family. NR2 subfamily. In terms of assembly, homodimer. Heterodimer; with a RAR molecule. Binds DNA preferentially as a RAR/RXR heterodimer. In terms of tissue distribution, isoform 1 is highly expressed inliver. Isoform 2 is abundantly expressed in eye and dorsal root ganglia.

Its subcellular location is the nucleus. Receptor for retinoic acid. Retinoic acid receptors bind as heterodimers to their target response elements in response to their ligands, all-trans or 9-cis retinoic acid, and regulate gene expression in various biological processes. The RAR/RXR heterodimers bind to the retinoic acid response elements (RARE) composed of tandem 5'-AGGTCA-3' sites known as DR1-DR5. The high affinity ligand for RXRs is 9-cis retinoic acid. This Gallus gallus (Chicken) protein is Retinoic acid receptor RXR-gamma (RXRG).